The sequence spans 576 residues: MDANSINSFFLIGALLTAVSVLLSPMSSRLGIPILLIFLAVGILAGEDGPGGILFDDYSTAYLVSNLALAIILLDGGMRTRVASFRVALWPALSLATFGVAITTSITGMMAAWLFDLHWLQGLLVGAIVGSTDAAAVFSLLKGRSLNERVGATLEIESGSNDPMAVFLTVTLIAILANVDTEMSFSFMFISFIKQFGLGICLGLGGGWMLWKLVNLSKLADGLYSILVLSGGLIIYAASNKLGGSGILSIYLVGLFLGNKPTRGRHAILNVLDGMTWVSQIGMFLVLGLLLTPSDLVDILIPGFALAFGMILFARPVAVWISLLPFKSFSSRDRWFISWVGLRGAVPIILAVFPMMAGLPGAQLYFNLAFFVVLVSLLVQGASLTTAARLAKVELPPKPLPVSRSGVEIYPSSEWEVFVYRLSESKWCIGEPLKRLAMPDGTRIAAVFRDDTLLHPSGSTRLEAGDILCVLGQEKSLEALSNLFSQAPENKEVQRFFGDFFIETDVKLADLAPIYGLSLDNLADDMTVADLVVLQLGANPVLGDQFQWQSLHWVVAGLYEGKVTNVGIRLPTEHSL.

Helical transmembrane passes span 6-26 (INSF…LSPM), 34-54 (ILLI…GGIL), 58-78 (YSTA…DGGM), 87-107 (VALW…TSIT), 109-129 (MMAA…GAIV), 163-183 (PMAV…DTEM), 185-205 (FSFM…LGLG), 219-239 (LADG…YAAS), 242-262 (LGGS…NKPT), 271-291 (VLDG…GLLL), 299-319 (ILIP…PVAV), 335-355 (WFIS…VFPM), and 359-379 (LPGA…SLLV). Residues 405-486 (SGVEIYPSSE…LEALSNLFSQ (82 aa)) form the RCK C-terminal domain.

The protein belongs to the monovalent cation:proton antiporter 1 (CPA1) transporter (TC 2.A.36) family. NhaP2 subfamily.

The protein resides in the cell inner membrane. The catalysed reaction is K(+)(in) + H(+)(out) = K(+)(out) + H(+)(in). K(+)/H(+) antiporter that extrudes potassium in exchange for external protons and maintains the internal concentration of potassium under toxic levels. The sequence is that of K(+)/H(+) antiporter NhaP2 from Shewanella baltica (strain OS195).